The following is a 370-amino-acid chain: MLKEFEIEPLLKDKAPHQIKAIVAMSGGVDSSVAAALLHNLGYQVIGVTLQLYGTDGNANARKGACCAGQDIYDAKRVAESVGFPHYILNYEEIFKKEVIEDFASTYMRGETPIPCVRCNQTVKFRDLLQVTKNLGADVLVTGHYVRRLEKNGEVKLCRSIDKSKDQSYFLFATTQEQLKLLRFPLGGFYKSDIRKLAKYFSLQISEKPDSQDICFVSESYSKTIAKLAPQSVQKGKIVDVNGKVLGEHSGIVNFTVGQRKGLGIAHNEPLYVIKINTENNEVIVGPINVLMQKKILIKELNWLEQPKEGMEVTVKLRSSHAGSLATIHSTDEKNKACVILNDDYFGISPGQACVAYKGEQVIGGGWICS.

ATP contacts are provided by residues 24-31 (AMSGGVDS) and Leu-50. Residue Cys-119 is the Nucleophile of the active site. A disulfide bridge connects residues Cys-119 and Cys-215. Gly-143 serves as a coordination point for ATP. An interaction with tRNA region spans residues 165–167 (KDQ). The active-site Cysteine persulfide intermediate is Cys-215.

It belongs to the MnmA/TRMU family.

The protein localises to the cytoplasm. The catalysed reaction is S-sulfanyl-L-cysteinyl-[protein] + uridine(34) in tRNA + AH2 + ATP = 2-thiouridine(34) in tRNA + L-cysteinyl-[protein] + A + AMP + diphosphate + H(+). Its function is as follows. Catalyzes the 2-thiolation of uridine at the wobble position (U34) of tRNA, leading to the formation of s(2)U34. The polypeptide is tRNA-specific 2-thiouridylase MnmA (Wolbachia sp. subsp. Drosophila simulans (strain wRi)).